We begin with the raw amino-acid sequence, 345 residues long: Anthranilate phosphoribosyltransferase (345 aa).

5-phospho-alpha-D-ribose 1-diphosphate-binding positions include Gly-84, 87-88 (GD), Thr-92, 94-97 (NIST), 112-120 (KHGNRSVSS), and Ser-124. Residue Gly-84 coordinates anthranilate. Ser-96 serves as a coordination point for Mg(2+). Asn-115 serves as a coordination point for anthranilate. Residue Arg-170 coordinates anthranilate. Mg(2+) is bound by residues Asp-229 and Glu-230.

This sequence belongs to the anthranilate phosphoribosyltransferase family. In terms of assembly, homodimer. It depends on Mg(2+) as a cofactor.

It catalyses the reaction N-(5-phospho-beta-D-ribosyl)anthranilate + diphosphate = 5-phospho-alpha-D-ribose 1-diphosphate + anthranilate. It participates in amino-acid biosynthesis; L-tryptophan biosynthesis; L-tryptophan from chorismate: step 2/5. In terms of biological role, catalyzes the transfer of the phosphoribosyl group of 5-phosphorylribose-1-pyrophosphate (PRPP) to anthranilate to yield N-(5'-phosphoribosyl)-anthranilate (PRA). This chain is Anthranilate phosphoribosyltransferase, found in Xanthomonas euvesicatoria pv. vesicatoria (strain 85-10) (Xanthomonas campestris pv. vesicatoria).